The chain runs to 196 residues: Peptidyl-tRNA hydrolase (196 aa).

Tyr14 provides a ligand contact to tRNA. His19 (proton acceptor) is an active-site residue. TRNA is bound by residues Tyr64, Asn66, and Asn112.

It belongs to the PTH family. As to quaternary structure, monomer.

The protein resides in the cytoplasm. It catalyses the reaction an N-acyl-L-alpha-aminoacyl-tRNA + H2O = an N-acyl-L-amino acid + a tRNA + H(+). Functionally, hydrolyzes ribosome-free peptidyl-tRNAs (with 1 or more amino acids incorporated), which drop off the ribosome during protein synthesis, or as a result of ribosome stalling. In terms of biological role, catalyzes the release of premature peptidyl moieties from peptidyl-tRNA molecules trapped in stalled 50S ribosomal subunits, and thus maintains levels of free tRNAs and 50S ribosomes. In Methylocella silvestris (strain DSM 15510 / CIP 108128 / LMG 27833 / NCIMB 13906 / BL2), this protein is Peptidyl-tRNA hydrolase.